Consider the following 418-residue polypeptide: 6-methylpretetramide 4-monooxygenase (418 aa).

Residues Asp-15–Arg-44 and Trp-289–Asp-299 each bind FAD.

This sequence belongs to the PheA/TfdB FAD monooxygenase family. FAD is required as a cofactor.

The catalysed reaction is 6-methylpretetramide + NADPH + O2 + 2 H(+) = 4-hydroxy-6-methylpretetramide + NADP(+) + H2O. The protein operates within antibiotic biosynthesis; oxytetracycline biosynthesis. Its function is as follows. Involved in the biosynthesis of the tetracycline antibiotic, oxytetracycline. Catalyzes the C-4 hydroxylation of 6-methylpretetramide to yield the intermediate 4-hydroxyl-6-methylpretetramid, which is subsequently hydroxylated by OxyL to yield 4-keto-anhydrotetracycline. OxyE serves as the ancillary enzyme to assist OxyL in the hydroxylation of C-4. This Streptomyces rimosus protein is 6-methylpretetramide 4-monooxygenase.